A 624-amino-acid chain; its full sequence is Adhesion and hyphal regulator 1 (624 aa).

The segment at residues 19–46 is a DNA-binding region (zn(2)-C6 fungal-type); it reads CVTCRDRHIKCDEQQPVCKNCQKSNRKC. 2 disordered regions span residues 63–84 and 230–250; these read DDNK…YAFP and PQHH…TDPN. Residues 237 to 250 are compositionally biased toward polar residues; the sequence is DTSQHQETTSTDPN.

Interacts with MCM1.

Its subcellular location is the nucleus. Functionally, transcription factor that binds the promoters of genes involved in biofilm formation, which include several key adhesion genes, and recruits MCM1 to these sites. Plays an important role in hyphal growth and virulence. Promotes conversion of opaque cells to white phase, but needs existence of EFG1, a key regulator required for maintenance of the white state. The polypeptide is Adhesion and hyphal regulator 1 (AHR1) (Candida albicans (strain SC5314 / ATCC MYA-2876) (Yeast)).